Consider the following 503-residue polypeptide: Lysine--tRNA ligase (503 aa).

Mg(2+) is bound by residues E412 and E419.

It belongs to the class-II aminoacyl-tRNA synthetase family. Homodimer. Requires Mg(2+) as cofactor.

The protein localises to the cytoplasm. It catalyses the reaction tRNA(Lys) + L-lysine + ATP = L-lysyl-tRNA(Lys) + AMP + diphosphate. In Idiomarina loihiensis (strain ATCC BAA-735 / DSM 15497 / L2-TR), this protein is Lysine--tRNA ligase.